The following is a 200-amino-acid chain: MELMVKGADALTVSETTFGREFNEALVHQVVVAYAAGARQGTRAQKTRSEVSGGGAKPWRQKGTGRARAGTIRSPIWRTGGVTFAAKPQDHSQKVNKKMYRGALKSILSELVRQDRLIVVDNFSVEAPKTKELVAKLKELELNDVLIVTGEVDENLFLAARNLYKVDARDVAGIDPVSLVAFDKVLMTAAAVKQVEEMLA.

Residues 42-65 are disordered; that stretch reads TRAQKTRSEVSGGGAKPWRQKGTG.

It belongs to the universal ribosomal protein uL4 family. In terms of assembly, part of the 50S ribosomal subunit.

One of the primary rRNA binding proteins, this protein initially binds near the 5'-end of the 23S rRNA. It is important during the early stages of 50S assembly. It makes multiple contacts with different domains of the 23S rRNA in the assembled 50S subunit and ribosome. Its function is as follows. Forms part of the polypeptide exit tunnel. This is Large ribosomal subunit protein uL4 from Aliivibrio fischeri (strain MJ11) (Vibrio fischeri).